A 489-amino-acid polypeptide reads, in one-letter code: Pup--protein ligase (489 aa).

E25 is a Mg(2+) binding site. Residue R69 participates in ATP binding. Position 71 (Y71) interacts with Mg(2+). D73 functions as the Proton acceptor in the catalytic mechanism. E79 is a binding site for Mg(2+). ATP contacts are provided by T82 and W447.

The protein belongs to the Pup ligase/Pup deamidase family. Pup-conjugating enzyme subfamily.

It carries out the reaction ATP + [prokaryotic ubiquitin-like protein]-L-glutamate + [protein]-L-lysine = ADP + phosphate + N(6)-([prokaryotic ubiquitin-like protein]-gamma-L-glutamyl)-[protein]-L-lysine.. It functions in the pathway protein degradation; proteasomal Pup-dependent pathway. Its pathway is protein modification; protein pupylation. Its function is as follows. Catalyzes the covalent attachment of the prokaryotic ubiquitin-like protein modifier Pup to the proteasomal substrate proteins, thereby targeting them for proteasomal degradation. This tagging system is termed pupylation. The ligation reaction involves the side-chain carboxylate of the C-terminal glutamate of Pup and the side-chain amino group of a substrate lysine. The sequence is that of Pup--protein ligase from Corynebacterium efficiens (strain DSM 44549 / YS-314 / AJ 12310 / JCM 11189 / NBRC 100395).